Reading from the N-terminus, the 1470-residue chain is ABC transporter G family member 48 (1470 aa).

Residues Met-1–Asn-47 are disordered. The span at Gly-9–Arg-24 shows a compositional bias: polar residues. An ABC transporter 1 domain is found at Gly-172 to Glu-445. Gly-205–Ser-212 provides a ligand contact to ATP. Positions Glu-523–Phe-736 constitute an ABC transmembrane type-2 1 domain. Helical transmembrane passes span Phe-541–Phe-561, Phe-577–Gln-597, Val-629–Phe-649, Phe-660–Ile-680, Val-686–Ile-706, and Phe-772–Leu-792. The tract at residues Gln-828–Thr-852 is disordered. Over residues Asn-832–Ser-843 the composition is skewed to low complexity. The region spanning Leu-869–Pro-1121 is the ABC transporter 2 domain. Residue Gly-914 to Thr-921 coordinates ATP. An ABC transmembrane type-2 2 domain is found at Ser-1194 to Phe-1408. The next 7 helical transmembrane spans lie at Ala-1215 to Gln-1234, Leu-1249 to Val-1271, Val-1301 to Tyr-1321, Phe-1331 to Ala-1351, Ala-1359 to Val-1379, Trp-1389 to Gly-1409, and Phe-1439 to Gly-1459.

This sequence belongs to the ABC transporter superfamily. ABCG family. PDR (TC 3.A.1.205) subfamily.

The protein resides in the membrane. In terms of biological role, may be a general defense protein. The polypeptide is ABC transporter G family member 48 (Oryza sativa subsp. japonica (Rice)).